A 274-amino-acid polypeptide reads, in one-letter code: Energy-coupling factor transporter ATP-binding protein EcfA1 (274 aa).

The region spanning 11–245 is the ABC transporter domain; sequence IELKNVKFKY…ERVIEIAKID (235 aa). 45–52 provides a ligand contact to ATP; sequence GHNGSGKS.

This sequence belongs to the ABC transporter superfamily. Energy-coupling factor EcfA family. As to quaternary structure, forms a stable energy-coupling factor (ECF) transporter complex composed of 2 membrane-embedded substrate-binding proteins (S component), 2 ATP-binding proteins (A component) and 2 transmembrane proteins (T component).

The protein resides in the cell membrane. Its function is as follows. ATP-binding (A) component of a common energy-coupling factor (ECF) ABC-transporter complex. Unlike classic ABC transporters this ECF transporter provides the energy necessary to transport a number of different substrates. The polypeptide is Energy-coupling factor transporter ATP-binding protein EcfA1 (Mycoplasma mobile (strain ATCC 43663 / 163K / NCTC 11711) (Mesomycoplasma mobile)).